A 288-amino-acid polypeptide reads, in one-letter code: B3 domain-containing protein At2g35310 (288 aa).

2 consecutive DNA-binding regions (TF-B3) follow at residues 19–114 (FFKV…FMQD) and 196–288 (AEFS…VSKP).

The protein resides in the nucleus. This Arabidopsis thaliana (Mouse-ear cress) protein is B3 domain-containing protein At2g35310.